The chain runs to 540 residues: Ribonuclease Y (540 aa).

The helical transmembrane segment at 4–24 (TILVPVAVAIVSVLVGGCAGY) threads the bilayer. A KH domain is found at 230-293 (TVSVVNLPND…EIAKRALERL (64 aa)). The region spanning 356-449 (VLSHSIEVGK…VVAADTISSA (94 aa)) is the HD domain.

Belongs to the RNase Y family.

The protein resides in the cell membrane. In terms of biological role, endoribonuclease that initiates mRNA decay. This chain is Ribonuclease Y, found in Lactobacillus gasseri (strain ATCC 33323 / DSM 20243 / BCRC 14619 / CIP 102991 / JCM 1131 / KCTC 3163 / NCIMB 11718 / NCTC 13722 / AM63).